The following is a 317-amino-acid chain: Olfactory receptor 8B3 (317 aa).

Topologically, residues 1–32 are extracellular; the sequence is MISMLAGNGSSVTEFVLAGLTDRPELQLPLFY. N-linked (GlcNAc...) asparagine glycosylation is present at Asn-8. Residues 33 to 53 traverse the membrane as a helical segment; sequence LFLIIYIITVVGNLGLIILIG. Residues 54–59 are Cytoplasmic-facing; it reads LNPHLH. The chain crosses the membrane as a helical span at residues 60-80; it reads TPMYYFLFNLSFIDLCYSSVF. Over 81 to 97 the chain is Extracellular; the sequence is SPKMLINFVSEKNSISY. Residues 98 to 118 form a helical membrane-spanning segment; that stretch reads AGCMTQLFLFLFFVISECYML. Residues 119 to 136 lie on the Cytoplasmic side of the membrane; the sequence is TSMAYDRYVAICNPLLYK. The helical transmembrane segment at 137-157 threads the bilayer; sequence VTMSPQICSVISFAAYGMGFA. Topologically, residues 158-199 are extracellular; sequence GSSAHTGCMLRLTFCNVNVINHYLCDILPLLQLSCTSTYVNE. A helical transmembrane segment spans residues 200–220; the sequence is VVVLIVVGINITVPSFTILIS. Over 221 to 242 the chain is Cytoplasmic; it reads YVFILANILNIKSTQGRAKAFS. Residues 243-263 traverse the membrane as a helical segment; it reads TCSSHIMAISLFFGSAAFMYL. Topologically, residues 264–274 are extracellular; it reads KYSSGSMEQGK. A helical membrane pass occupies residues 275–294; the sequence is ISSVFYTNVGPMLNPLIYSL. Over 295–317 the chain is Cytoplasmic; that stretch reads RNKDVKVALRKSLIKFREKTDFN.

It belongs to the G-protein coupled receptor 1 family.

Its subcellular location is the cell membrane. Its function is as follows. Odorant receptor. The polypeptide is Olfactory receptor 8B3 (Mus musculus (Mouse)).